A 215-amino-acid chain; its full sequence is Ran-specific GTPase-activating protein 1 (215 aa).

Basic and acidic residues-rich tracts occupy residues 1-18 (MSAEQEKKTQGTTKEEQK) and 26-35 (VASKQTEEAK). The interval 1-78 (MSAEQEKKTQ…ASPEVHFEPI (78 aa)) is disordered. A Phosphoserine modification is found at Ser-70. One can recognise a RanBD1 domain in the interval 74–210 (HFEPIVKLSA…FEKYQEENAK (137 aa)).

This sequence belongs to the RANBP1 family.

It localises to the cytoplasm. Stimulates the GTPase activity in the presence of RNA1. May potentiate the action of RanGAP1 (RNA1), thus playing the role of a negative regulator. This Schizosaccharomyces pombe (strain 972 / ATCC 24843) (Fission yeast) protein is Ran-specific GTPase-activating protein 1 (sbp1).